We begin with the raw amino-acid sequence, 330 residues long: tRNA(Ile)-lysidine synthase (330 aa).

31–36 (SGGQDS) serves as a coordination point for ATP.

Belongs to the tRNA(Ile)-lysidine synthase family.

Its subcellular location is the cytoplasm. The catalysed reaction is cytidine(34) in tRNA(Ile2) + L-lysine + ATP = lysidine(34) in tRNA(Ile2) + AMP + diphosphate + H(+). Ligates lysine onto the cytidine present at position 34 of the AUA codon-specific tRNA(Ile) that contains the anticodon CAU, in an ATP-dependent manner. Cytidine is converted to lysidine, thus changing the amino acid specificity of the tRNA from methionine to isoleucine. The protein is tRNA(Ile)-lysidine synthase of Synechocystis sp. (strain ATCC 27184 / PCC 6803 / Kazusa).